A 120-amino-acid chain; its full sequence is Adult-specific rigid cuticular protein 11.9 (120 aa).

Positions 9–87 (GGAYNFGYNT…ALAAMAPKAP (79 aa)) constitute a Chitin-binding type R&amp;R domain.

Component of the rigid cuticle of the spider. This is Adult-specific rigid cuticular protein 11.9 from Araneus diadematus (European garden spider).